The chain runs to 373 residues: Queuine tRNA-ribosyltransferase (373 aa).

The active-site Proton acceptor is the Asp90. Substrate contacts are provided by residues 90-94, Asp144, Gln193, and Gly220; that span reads DSGGF. The segment at 251–257 is RNA binding; the sequence is GVGTPED. Asp270 (nucleophile) is an active-site residue. Residues 275 to 279 are RNA binding; important for wobble base 34 recognition; it reads TRNAR. Zn(2+) is bound by residues Cys308, Cys310, Cys313, and His339.

Belongs to the queuine tRNA-ribosyltransferase family. As to quaternary structure, homodimer. Within each dimer, one monomer is responsible for RNA recognition and catalysis, while the other monomer binds to the replacement base PreQ1. The cofactor is Zn(2+).

It catalyses the reaction 7-aminomethyl-7-carbaguanine + guanosine(34) in tRNA = 7-aminomethyl-7-carbaguanosine(34) in tRNA + guanine. It participates in tRNA modification; tRNA-queuosine biosynthesis. In terms of biological role, catalyzes the base-exchange of a guanine (G) residue with the queuine precursor 7-aminomethyl-7-deazaguanine (PreQ1) at position 34 (anticodon wobble position) in tRNAs with GU(N) anticodons (tRNA-Asp, -Asn, -His and -Tyr). Catalysis occurs through a double-displacement mechanism. The nucleophile active site attacks the C1' of nucleotide 34 to detach the guanine base from the RNA, forming a covalent enzyme-RNA intermediate. The proton acceptor active site deprotonates the incoming PreQ1, allowing a nucleophilic attack on the C1' of the ribose to form the product. After dissociation, two additional enzymatic reactions on the tRNA convert PreQ1 to queuine (Q), resulting in the hypermodified nucleoside queuosine (7-(((4,5-cis-dihydroxy-2-cyclopenten-1-yl)amino)methyl)-7-deazaguanosine). The polypeptide is Queuine tRNA-ribosyltransferase (Campylobacter lari (strain RM2100 / D67 / ATCC BAA-1060)).